An 850-amino-acid chain; its full sequence is Endoribonuclease ysh-1 (850 aa).

Residues histidine 83, histidine 85, aspartate 87, histidine 88, histidine 173, and aspartate 194 each contribute to the Zn(2+) site. Histidine 442 functions as the Proton donor in the catalytic mechanism. Histidine 464 is a Zn(2+) binding site. Disordered stretches follow at residues 685 to 708 (VKRS…PHSH) and 732 to 784 (SPIV…EQQL). Over residues 744 to 754 (PTTKAITSPSE) the composition is skewed to polar residues. Residues 755 to 766 (ETAKSSDVKSDA) are compositionally biased toward basic and acidic residues. Residues 767–781 (DADASMDVSEEDEDE) are compositionally biased toward acidic residues.

This sequence belongs to the metallo-beta-lactamase superfamily. RNA-metabolizing metallo-beta-lactamase-like family. CPSF2/YSH1 subfamily.

It localises to the nucleus. Functionally, component of the cleavage factor I (CF I) involved in pre-mRNA 3'-end processing. This chain is Endoribonuclease ysh-1 (ysh-1), found in Neurospora crassa (strain ATCC 24698 / 74-OR23-1A / CBS 708.71 / DSM 1257 / FGSC 987).